The primary structure comprises 343 residues: Glucokinase (343 aa).

18 to 23 is an ATP binding site; sequence GDIGGT.

It belongs to the bacterial glucokinase family.

Its subcellular location is the cytoplasm. It carries out the reaction D-glucose + ATP = D-glucose 6-phosphate + ADP + H(+). The sequence is that of Glucokinase from Brucella suis biovar 1 (strain 1330).